The following is a 562-amino-acid chain: Calmodulin-binding protein 60 F (562 aa).

The disordered stretch occupies residues methionine 1–glutamate 22. Residues methionine 5–lysine 84 are calmodulin-binding. The span at histidine 12–glutamate 22 shows a compositional bias: basic and acidic residues. The DNA-binding stretch occupies residues glutamate 154–asparagine 273.

This sequence belongs to the plant ACBP60 protein family. In terms of assembly, interacts with calmodulin (CaM).

It is found in the nucleus. Its function is as follows. Transcription activator that binds DNA in a sequence-specific manner, likely 5'-GAAATTTTGG-3', to promote the expression of target genes. In Arabidopsis thaliana (Mouse-ear cress), this protein is Calmodulin-binding protein 60 F.